The primary structure comprises 212 residues: 2-C-methyl-D-erythritol 4-phosphate cytidylyltransferase (212 aa).

It belongs to the IspD/TarI cytidylyltransferase family. IspD subfamily.

It carries out the reaction 2-C-methyl-D-erythritol 4-phosphate + CTP + H(+) = 4-CDP-2-C-methyl-D-erythritol + diphosphate. The protein operates within isoprenoid biosynthesis; isopentenyl diphosphate biosynthesis via DXP pathway; isopentenyl diphosphate from 1-deoxy-D-xylulose 5-phosphate: step 2/6. Catalyzes the formation of 4-diphosphocytidyl-2-C-methyl-D-erythritol from CTP and 2-C-methyl-D-erythritol 4-phosphate (MEP). The sequence is that of 2-C-methyl-D-erythritol 4-phosphate cytidylyltransferase from Chlamydia felis (strain Fe/C-56) (Chlamydophila felis).